A 138-amino-acid chain; its full sequence is Altered inheritance of mitochondria protein 11 (138 aa).

Transmembrane regions (helical) follow at residues 17–34 and 67–89; these read ARFYGAAAFTLITMRLIS and LTYASAASIGTFSTLIFGFCWAL.

Belongs to the AIM11 family.

Its subcellular location is the membrane. The chain is Altered inheritance of mitochondria protein 11 (AIM11) from Saccharomyces cerevisiae (strain JAY291) (Baker's yeast).